The sequence spans 372 residues: Protein REVEILLE 7 (372 aa).

The HTH myb-type domain occupies 71–125 (TVTKQREKWSEEEHDRFLEAIKLYGRGWRQIQEHIGTKTAVQIRSHAQKFFSKMA). The segment at residues 98–121 (WRQIQEHIGTKTAVQIRSHAQKFF) is a DNA-binding region (H-T-H motif). The tract at residues 124 to 204 (MAQEADSRSE…RCSSPNSCTS (81 aa)) is disordered. The segment covering 145-155 (RPKRKPAHPYP) has biased composition (basic residues). Pro residues predominate over residues 156–169 (RKSPVPYTQSPPPN). The segment covering 178 to 204 (KSPTSVLSSFGSEDQVNRCSSPNSCTS) has biased composition (polar residues).

Its subcellular location is the nucleus. Functionally, transcription factor involved in phytochrome A-mediated cotyledon opening. Controlled by the central oscillator mediated by LHY and CCA1. Part of a regulatory circadian feedback loop. Regulates its own expression. This is Protein REVEILLE 7 (RVE7) from Arabidopsis thaliana (Mouse-ear cress).